Consider the following 162-residue polypeptide: Cyclic pyranopterin monophosphate synthase (162 aa).

Residues 75 to 77 (LCH) and 113 to 114 (ME) each bind substrate. Asp-128 is a catalytic residue.

The protein belongs to the MoaC family. Homohexamer; trimer of dimers.

The enzyme catalyses (8S)-3',8-cyclo-7,8-dihydroguanosine 5'-triphosphate = cyclic pyranopterin phosphate + diphosphate. Its pathway is cofactor biosynthesis; molybdopterin biosynthesis. Catalyzes the conversion of (8S)-3',8-cyclo-7,8-dihydroguanosine 5'-triphosphate to cyclic pyranopterin monophosphate (cPMP). The sequence is that of Cyclic pyranopterin monophosphate synthase from Burkholderia cenocepacia (strain ATCC BAA-245 / DSM 16553 / LMG 16656 / NCTC 13227 / J2315 / CF5610) (Burkholderia cepacia (strain J2315)).